Consider the following 130-residue polypeptide: MYSAVTRGIEVTVEPFYLEVQSEPEENRYVWGYRVTIVNNSSETVQLCSRYWQITDANGHVQEVRGSGVVGEQPVLDPGASYQYSSGCPLTTSSGVMVGRYQMKGEDGAQFEIEIPAFSLDVPEQRRTLN.

The ApaG domain maps to 3–127 (SAVTRGIEVT…FSLDVPEQRR (125 aa)).

This chain is Protein ApaG, found in Brucella suis biovar 1 (strain 1330).